The chain runs to 229 residues: Ribulose-phosphate 3-epimerase (229 aa).

Serine 13 contributes to the substrate binding site. 3 residues coordinate a divalent metal cation: histidine 36, aspartate 38, and histidine 69. Aspartate 38 functions as the Proton acceptor in the catalytic mechanism. Substrate is bound by residues histidine 69, 145–148 (GFGG), 178–180 (DGG), and 200–201 (GS). A divalent metal cation is bound at residue aspartate 178. The active-site Proton donor is the aspartate 178.

It belongs to the ribulose-phosphate 3-epimerase family. Requires a divalent metal cation as cofactor.

It carries out the reaction D-ribulose 5-phosphate = D-xylulose 5-phosphate. It functions in the pathway carbohydrate degradation. In terms of biological role, catalyzes the reversible epimerization of D-ribulose 5-phosphate to D-xylulose 5-phosphate. This chain is Ribulose-phosphate 3-epimerase, found in Mycobacterium bovis (strain ATCC BAA-935 / AF2122/97).